The following is a 162-amino-acid chain: MIRFAQYARYPVISRLMKPTVISPFQAQAFSSSSVMLKTLNQTIRNKEKRPEKTNKQSVALEGSPFRRGVCTRVFTVKPKKPNSAVRKVARVRLSTGRSVTAYIPGIGHNAQEHAVVLLRGGRAQDCPGVQYHVVRGVYDIAGVAGRVTSRSKYGVKKPKAA.

A mitochondrion-targeting transit peptide spans 1–37 (MIRFAQYARYPVISRLMKPTVISPFQAQAFSSSSVML).

The protein belongs to the universal ribosomal protein uS12 family. Component of the mitochondrial small ribosomal subunit (mt-SSU). Mature yeast 74S mitochondrial ribosomes consist of a small (37S) and a large (54S) subunit. The 37S small subunit contains a 15S ribosomal RNA (15S mt-rRNA) and at least 32 different proteins. The 54S large subunit contains a 21S rRNA (21S mt-rRNA) and at least 45 different proteins. uS12m forms part of the decoding center of the mt-SSU.

The protein resides in the mitochondrion. Functionally, component of the mitochondrial ribosome (mitoribosome), a dedicated translation machinery responsible for the synthesis of mitochondrial genome-encoded proteins, including at least some of the essential transmembrane subunits of the mitochondrial respiratory chain. The mitoribosomes are attached to the mitochondrial inner membrane and translation products are cotranslationally integrated into the membrane. uS12m is required for respiratory growth. The sequence is that of Small ribosomal subunit protein uS12m from Schizosaccharomyces pombe (strain 972 / ATCC 24843) (Fission yeast).